The chain runs to 144 residues: Large ribosomal subunit protein uL15 (144 aa).

The disordered stretch occupies residues 1 to 48 (MRLNTLSPAAGSKSAAKRVGRGIGSGTGKTCGRGHKGQKSRSGGGVRI). The span at 21–31 (RGIGSGTGKTC) shows a compositional bias: gly residues.

It belongs to the universal ribosomal protein uL15 family. Part of the 50S ribosomal subunit.

In terms of biological role, binds to the 23S rRNA. In Shewanella woodyi (strain ATCC 51908 / MS32), this protein is Large ribosomal subunit protein uL15.